The sequence spans 124 residues: Ribosome-binding factor A (124 aa).

It belongs to the RbfA family. In terms of assembly, monomer. Binds 30S ribosomal subunits, but not 50S ribosomal subunits or 70S ribosomes.

It localises to the cytoplasm. One of several proteins that assist in the late maturation steps of the functional core of the 30S ribosomal subunit. Associates with free 30S ribosomal subunits (but not with 30S subunits that are part of 70S ribosomes or polysomes). Required for efficient processing of 16S rRNA. May interact with the 5'-terminal helix region of 16S rRNA. The protein is Ribosome-binding factor A of Buchnera aphidicola subsp. Schizaphis graminum (strain Sg).